We begin with the raw amino-acid sequence, 807 residues long: Ecotropic viral integration site 5 ortholog (807 aa).

The segment at 1-31 (MTLTTTTTASSAESQAKMDVKGGALPGEENL) is disordered. Threonine 33 is modified (phosphothreonine). Phosphoserine is present on residues serine 58 and serine 64. The Rab-GAP TBC domain occupies 116–300 (GIPHHFRAIV…RIMDVFLSEG (185 aa)). Coiled-coil stretches lie at residues 352–463 (SIKL…ENNV), 494–583 (CLLE…ENQR), and 627–772 (REME…RGKF).

In terms of assembly, interacts with Rab11.

It localises to the cytoplasm. The protein localises to the endosome. Functions as a GTPase-activating protein (GAP). During border cell migration in the ovary, acts as a GAP for Rab11 and is necessary for the maintenance of active receptor tyrosine kinases at the leading edge. The protein is Ecotropic viral integration site 5 ortholog (Evi5) of Drosophila melanogaster (Fruit fly).